The sequence spans 406 residues: Luteothin monooxygenase (406 aa).

Residues histidine 98, arginine 102, arginine 296, glycine 350, histidine 353, and cysteine 355 each coordinate heme b.

It belongs to the cytochrome P450 family. Monomer. The cofactor is heme b.

It catalyses the reaction luteothin + 4 reduced [2Fe-2S]-[ferredoxin] + 2 O2 + 4 H(+) = aureothin + 4 oxidized [2Fe-2S]-[ferredoxin] + 3 H2O. Its pathway is antibiotic biosynthesis. It functions in the pathway polyketide biosynthesis. In terms of biological role, bifunctional cytochrome P450 protein involved in the biosynthesis of the antibiotic aureothin, a nitroaryl polyketide metabolite with antifungal, cytotoxic and insecticidal activities. Catalyzes the hydroxylation of luteothin (also called deoxyaureothin), leading to the formation of the intermediate (7R)-7-hydroxydeoxyaureothin, followed by the formation of the aureothin tetrahydrofuran ring, the final step in the biosynthesis of aureothin. This Streptomyces thioluteus protein is Luteothin monooxygenase.